We begin with the raw amino-acid sequence, 496 residues long: 2,3-bisphosphoglycerate-independent phosphoglycerate mutase (496 aa).

The Mn(2+) site is built by Asp12 and Ser62. Ser62 (phosphoserine intermediate) is an active-site residue. Residues His121, 150-151, Arg181, Arg187, 252-255, and Lys317 contribute to the substrate site; these read RD and RNDR. The Mn(2+) site is built by Asp384, His388, Asp425, His426, and His444.

The protein belongs to the BPG-independent phosphoglycerate mutase family. As to quaternary structure, monomer. Mn(2+) is required as a cofactor.

It carries out the reaction (2R)-2-phosphoglycerate = (2R)-3-phosphoglycerate. It functions in the pathway carbohydrate degradation; glycolysis; pyruvate from D-glyceraldehyde 3-phosphate: step 3/5. Functionally, catalyzes the interconversion of 2-phosphoglycerate and 3-phosphoglycerate. The chain is 2,3-bisphosphoglycerate-independent phosphoglycerate mutase from Anaplasma phagocytophilum (strain HZ).